The following is a 249-amino-acid chain: Ribonuclease PH (249 aa).

Phosphate contacts are provided by residues Arg-90 and 128–130; that span reads GTR.

It belongs to the RNase PH family. Homohexameric ring arranged as a trimer of dimers.

The enzyme catalyses tRNA(n+1) + phosphate = tRNA(n) + a ribonucleoside 5'-diphosphate. Phosphorolytic 3'-5' exoribonuclease that plays an important role in tRNA 3'-end maturation. Removes nucleotide residues following the 3'-CCA terminus of tRNAs; can also add nucleotides to the ends of RNA molecules by using nucleoside diphosphates as substrates, but this may not be physiologically important. Probably plays a role in initiation of 16S rRNA degradation (leading to ribosome degradation) during starvation. The sequence is that of Ribonuclease PH from Parasynechococcus marenigrum (strain WH8102).